The primary structure comprises 284 residues: Type II methyltransferase M1.LlaDCHI (284 aa).

Positions 17, 21, 62, and 194 each coordinate S-adenosyl-L-methionine.

Belongs to the N(4)/N(6)-methyltransferase family.

It carries out the reaction a 2'-deoxyadenosine in DNA + S-adenosyl-L-methionine = an N(6)-methyl-2'-deoxyadenosine in DNA + S-adenosyl-L-homocysteine + H(+). In terms of biological role, an alpha subtype methylase, recognizes the double-stranded sequence 5'-GATC-3', methylates A-2 on both strands, and protects the DNA from cleavage by the LlaDCHI endonuclease. The sequence is that of Type II methyltransferase M1.LlaDCHI from Lactococcus lactis subsp. cremoris (Streptococcus cremoris).